The following is a 197-amino-acid chain: Guanylate kinase (197 aa).

The Guanylate kinase-like domain occupies 6-191 (SKLIILSGPS…CVAQIEKIIS (186 aa)). Residue 13-20 (GPSGVGKG) participates in ATP binding.

It belongs to the guanylate kinase family.

The protein localises to the cytoplasm. The catalysed reaction is GMP + ATP = GDP + ADP. Its function is as follows. Essential for recycling GMP and indirectly, cGMP. This is Guanylate kinase from Mesomycoplasma hyopneumoniae (strain 7448) (Mycoplasma hyopneumoniae).